A 236-amino-acid polypeptide reads, in one-letter code: Uridylate kinase (236 aa).

ATP is bound at residue 10 to 13 (KLSG). Gly52 is a UMP binding site. Residues Gly53 and Arg57 each coordinate ATP. Residues Asp72 and 133–140 (TGNPFFTT) each bind UMP. Residues Thr160, Tyr166, and Asp169 each coordinate ATP.

It belongs to the UMP kinase family. Homohexamer.

Its subcellular location is the cytoplasm. It carries out the reaction UMP + ATP = UDP + ADP. It participates in pyrimidine metabolism; CTP biosynthesis via de novo pathway; UDP from UMP (UMPK route): step 1/1. Its activity is regulated as follows. Inhibited by UTP. Catalyzes the reversible phosphorylation of UMP to UDP. This chain is Uridylate kinase, found in Phocaeicola vulgatus (strain ATCC 8482 / DSM 1447 / JCM 5826 / CCUG 4940 / NBRC 14291 / NCTC 11154) (Bacteroides vulgatus).